Here is a 360-residue protein sequence, read N- to C-terminus: 3-dehydroquinate synthase (360 aa).

NAD(+) contacts are provided by residues 70-75 (DGEKYK), 104-108 (GVIGD), 128-129 (TT), Lys-141, and Lys-150. Residues Glu-183, His-246, and His-263 each contribute to the Zn(2+) site.

Belongs to the sugar phosphate cyclases superfamily. Dehydroquinate synthase family. Co(2+) is required as a cofactor. It depends on Zn(2+) as a cofactor. Requires NAD(+) as cofactor.

Its subcellular location is the cytoplasm. The catalysed reaction is 7-phospho-2-dehydro-3-deoxy-D-arabino-heptonate = 3-dehydroquinate + phosphate. The protein operates within metabolic intermediate biosynthesis; chorismate biosynthesis; chorismate from D-erythrose 4-phosphate and phosphoenolpyruvate: step 2/7. Its function is as follows. Catalyzes the conversion of 3-deoxy-D-arabino-heptulosonate 7-phosphate (DAHP) to dehydroquinate (DHQ). In Acinetobacter baumannii (strain SDF), this protein is 3-dehydroquinate synthase.